A 384-amino-acid chain; its full sequence is GDSL esterase/lipase At1g28670 (384 aa).

Positions 1 to 24 are cleaved as a signal peptide; that stretch reads MASSLKKLISSFLLVLYSTTIIVA. Residue S42 is the Nucleophile of the active site. N105, N138, and N321 each carry an N-linked (GlcNAc...) asparagine glycan. Active-site residues include D346 and H349.

This sequence belongs to the 'GDSL' lipolytic enzyme family.

The protein localises to the secreted. In Arabidopsis thaliana (Mouse-ear cress), this protein is GDSL esterase/lipase At1g28670.